The sequence spans 711 residues: MRYVVSPQLVLYVEKGQKIKRVLYLTPYGVLDDKSPIYYFLSTHLKITDPEIHRRHILLTLKISQLKGYLCNLLDIRNDIIIYSHKNNLEYSYVDNTIFNPFVHTQKKTLIKSDGFLYNIYPGACDFLVIWVANADDTSIAEFGSYEDVDVNILKFETRLLEVFDNLDLDMNIESKFNNIFRTNLKFTGLRKLIKKINELNGLYYKSLLYKSDEYFINLTGNKFILTDERLNLTVWDPDGVVTFSSDGDTITINNVKLFTSLLTDIDLQMERIKGDVTYKIFLSTPITSRIKLNIETSFIFVETATNNILLSADKRISIILAKNHISIKVKNYIPNIEKYFTFLVIAINSMFNNIQQASDFTKIETVYWSRICQNTKNKHRKPVIVSSLDDNMEKVSDNFYKSSTKEVFINSSGIMFSCLDPLNKYNYVGFLSIFYRLQKMCIPCCFLKNQSHTETFSSCVHQKEITSDVINPYILNFGKVVTKSKISFLPIIFDSFFNKGVKIIFEQDNKRLKETIGYHVVKSCDEDIKRLRTISDIIMFVNEDKNILIAEDIIYFPMNYADIGTRVYILIQEIVHEVIVVKKHMTKDLIEVCPPNYKLVKNLFPRQTKFATIRSDSGMELTTDGFLVDGKEFNVDLSSNYVAFTKNITTPYTLSKYFAPLFKYVITESKNRFMKTWLINTMLRLGIDLDLDTNILPKLEKYYPNHGKSV.

This sequence belongs to the poxviridae VETF large subunit family. Heterodimer of a 70 kDa and a 82 kDa subunit. Part of the early transcription complex composed of ETF, RAP94, and the DNA-directed RNA polymerase.

Functionally, acts with RNA polymerase to initiate transcription from early gene promoters. Is recruited by the RPO-associated protein of 94 kDa (RAP94) to form the early transcription complex, which also contains the core RNA polymerase. ETF heterodimer binds to early gene promoters. This is Early transcription factor 82 kDa subunit (VETFL) from Oryctolagus cuniculus (Rabbit).